A 678-amino-acid polypeptide reads, in one-letter code: Geranylgeranyl transferase type-2 subunit alpha 1 (678 aa).

PFTA repeat units follow at residues 40-74 (YTNEAIELSTKLLEINPEAYTAWNYRKLAVEDRLA), 86-120 (ILDEELRVVESALRQNFKSYGAWHHRKWVLSKGHS), 121-155 (SVGNELRLLEKFQKLDSRNFHAWNYRRFVVELTNR), 156-190 (SEQDELQYTDDMINNNFSNYSAWHNRSVLLSSLLA), and 201-235 (KIPEEYDFVHSAIFTEPDDQSGWFYHLWLLDQTLN). LRR repeat units follow at residues 510–532 (MNNLVCLRLNNLSLSRIASVEKL), 533–554 (LFVQMLDLSHNELHSTEGLEAM), 555–578 (QLLSCLNLSHNRIRSFSALDSLRH), 580–604 (KQLKVLDVSHNHIGKHSVDTTRYLC), and 638–663 (DLNLKQLDIAGNEIAGEEFSSFVLQV).

It belongs to the protein prenyltransferase subunit alpha family. As to quaternary structure, heterotrimer composed of the alpha subunit RGTA, the beta subunit RGTB and REP; within this trimer, RGTA and RGTB form the catalytic component, while REP mediates peptide substrate binding.

The enzyme catalyses geranylgeranyl diphosphate + L-cysteinyl-[protein] = S-geranylgeranyl-L-cysteinyl-[protein] + diphosphate. Its activity is regulated as follows. The enzymatic reaction requires the aid of the Rab escort protein REP. Catalyzes the transfer of a geranylgeranyl moiety from geranylgeranyl diphosphate to both cysteines of Rab proteins with the C-terminal sequence -CCXX, CXXX, -XCCX and -XCXC, such as RABA1A, RABA2A, RABF2A and RABG2. In vitro, can prenylate PGGTI targets with the C-terminal Cys-aliphatic-aliphatic-X (CaaX) with leucine in the terminal position. Substrates with the C-terminal sequence -CSIL such as ARAC11/ROP1 or GG2/AGG2 are prenylated independently of REP and when the alpha subunit is associated with a beta subunit (RGTB1 or RGTB2). The polypeptide is Geranylgeranyl transferase type-2 subunit alpha 1 (Arabidopsis thaliana (Mouse-ear cress)).